We begin with the raw amino-acid sequence, 92 residues long: Tachykinin-2 (92 aa).

A signal peptide spans 1-22 (MIRVGLILCCIFIVGVFEASSA). Positions 23-37 (DDILTAHNLIKRSEV) are excised as a propeptide. At Met-49 the chain carries Methionine amide. Residues 52–92 (SEELTRRLIQHPGSMSETSKRGPPKKGDFNPNELKPESNIC) constitute a propeptide that is removed on maturation. Residues 61–92 (QHPGSMSETSKRGPPKKGDFNPNELKPESNIC) are disordered.

It belongs to the tachykinin family. As to expression, expressed in the posterior salivary gland and more specifically in the mucus-secreting gland cells.

The protein localises to the secreted. Functionally, tachykinins are active peptides which excite neurons, evoke behavioral responses, are potent vasodilators and secretagogues, and contract (directly or indirectly) many smooth muscles. The chain is Tachykinin-2 from Octopus vulgaris (Common octopus).